The sequence spans 129 residues: Cytochrome c-type protein SHP (129 aa).

The N-terminal stretch at 1–17 is a signal peptide; that stretch reads MTRFLILSAVLAGPALA. The heme c site is built by cysteine 60, cysteine 63, and histidine 64. An intrachain disulfide couples cysteine 106 to cysteine 114.

Binds 1 heme c group covalently per subunit.

Functionally, high-spin cytochrome. Transiently bind oxygen during autoxidation, which occurs with a half-life of 3 minutes with a 4-fold excess of O(2). Also binds carbon monoxide, azide and cyanide. The sequence is that of Cytochrome c-type protein SHP (shp) from Cereibacter sphaeroides (strain ATCC 17023 / DSM 158 / JCM 6121 / CCUG 31486 / LMG 2827 / NBRC 12203 / NCIMB 8253 / ATH 2.4.1.) (Rhodobacter sphaeroides).